Here is a 170-residue protein sequence, read N- to C-terminus: Zinc finger A20 and AN1 domain-containing stress-associated protein 6 (170 aa).

The segment at Pro-10–Gln-44 adopts an A20-type zinc-finger fold. Zn(2+)-binding residues include Cys-16, Cys-20, Cys-32, and Cys-35. The disordered stretch occupies residues Thr-53–Pro-76. Residues Gln-105–Gly-151 form an AN1-type zinc finger. The Zn(2+) site is built by Cys-111, Cys-114, Cys-125, Cys-127, Cys-132, His-135, His-141, and Cys-143.

May be involved in environmental stress response. The polypeptide is Zinc finger A20 and AN1 domain-containing stress-associated protein 6 (SAP6) (Arabidopsis thaliana (Mouse-ear cress)).